Here is a 207-residue protein sequence, read N- to C-terminus: Sodium/potassium-transporting ATPase subunit beta-1-interacting protein 1 (207 aa).

Transmembrane regions (helical) follow at residues 2 to 22 (GRCS…AAAL), 35 to 55 (APIL…LGTL), and 62 to 82 (LILY…IICF). N-linked (GlcNAc...) asparagine glycosylation occurs at N100. A helical transmembrane segment spans residues 147 to 167 (ALSSALQIFLALFGFVYACYV).

This sequence belongs to the NKAIN family. In terms of assembly, interacts with atp1b1 C-terminus.

The protein localises to the cell membrane. The sequence is that of Sodium/potassium-transporting ATPase subunit beta-1-interacting protein 1 (nkain1) from Xenopus tropicalis (Western clawed frog).